Consider the following 1072-residue polypeptide: Carbamoyl phosphate synthase large chain (1072 aa).

A carboxyphosphate synthetic domain region spans residues M1–E401. ATP is bound by residues R129, R169, G175, G176, K208, L210, E215, G241, V242, H243, Q284, and E298. Positions K133 to I327 constitute an ATP-grasp 1 domain. Q284, E298, and N300 together coordinate Mg(2+). Residues Q284, E298, and N300 each coordinate Mn(2+). Positions I402–D544 are oligomerization domain. Residues E545–G929 form a carbamoyl phosphate synthetic domain region. Residues S671–L861 enclose the ATP-grasp 2 domain. Residues R707, K746, I748, E752, G777, V778, H779, S780, Q820, and E832 each contribute to the ATP site. Mg(2+)-binding residues include Q820, E832, and N834. Mn(2+) is bound by residues Q820, E832, and N834. The MGS-like domain maps to L930–L1072. The allosteric domain stretch occupies residues L930–L1072.

It belongs to the CarB family. As to quaternary structure, composed of two chains; the small (or glutamine) chain promotes the hydrolysis of glutamine to ammonia, which is used by the large (or ammonia) chain to synthesize carbamoyl phosphate. Tetramer of heterodimers (alpha,beta)4. It depends on Mg(2+) as a cofactor. The cofactor is Mn(2+).

It carries out the reaction hydrogencarbonate + L-glutamine + 2 ATP + H2O = carbamoyl phosphate + L-glutamate + 2 ADP + phosphate + 2 H(+). The catalysed reaction is hydrogencarbonate + NH4(+) + 2 ATP = carbamoyl phosphate + 2 ADP + phosphate + 2 H(+). It participates in amino-acid biosynthesis; L-arginine biosynthesis; carbamoyl phosphate from bicarbonate: step 1/1. The protein operates within pyrimidine metabolism; UMP biosynthesis via de novo pathway; (S)-dihydroorotate from bicarbonate: step 1/3. Its function is as follows. Large subunit of the glutamine-dependent carbamoyl phosphate synthetase (CPSase). CPSase catalyzes the formation of carbamoyl phosphate from the ammonia moiety of glutamine, carbonate, and phosphate donated by ATP, constituting the first step of 2 biosynthetic pathways, one leading to arginine and/or urea and the other to pyrimidine nucleotides. The large subunit (synthetase) binds the substrates ammonia (free or transferred from glutamine from the small subunit), hydrogencarbonate and ATP and carries out an ATP-coupled ligase reaction, activating hydrogencarbonate by forming carboxy phosphate which reacts with ammonia to form carbamoyl phosphate. The sequence is that of Carbamoyl phosphate synthase large chain from Thermoanaerobacter sp. (strain X514).